The sequence spans 74 residues: Translation initiation factor IF-1 (74 aa).

Positions 1-72 constitute an S1-like domain; sequence MSKQDLIEME…TKGRITYRLR (72 aa).

The protein belongs to the IF-1 family. As to quaternary structure, component of the 30S ribosomal translation pre-initiation complex which assembles on the 30S ribosome in the order IF-2 and IF-3, IF-1 and N-formylmethionyl-tRNA(fMet); mRNA recruitment can occur at any time during PIC assembly.

The protein resides in the cytoplasm. Its function is as follows. One of the essential components for the initiation of protein synthesis. Stabilizes the binding of IF-2 and IF-3 on the 30S subunit to which N-formylmethionyl-tRNA(fMet) subsequently binds. Helps modulate mRNA selection, yielding the 30S pre-initiation complex (PIC). Upon addition of the 50S ribosomal subunit IF-1, IF-2 and IF-3 are released leaving the mature 70S translation initiation complex. This is Translation initiation factor IF-1 from Trichodesmium erythraeum (strain IMS101).